The following is a 146-amino-acid chain: Large ribosomal subunit protein uL13 (146 aa).

The interval 125-146 (YAGPKHPHAAQQPKVYEPRPRG) is disordered.

This sequence belongs to the universal ribosomal protein uL13 family. In terms of assembly, part of the 50S ribosomal subunit.

Its function is as follows. This protein is one of the early assembly proteins of the 50S ribosomal subunit, although it is not seen to bind rRNA by itself. It is important during the early stages of 50S assembly. The protein is Large ribosomal subunit protein uL13 of Roseiflexus sp. (strain RS-1).